Here is a 332-residue protein sequence, read N- to C-terminus: uncharacterized protein (332 aa).

The first 26 residues, 1–26 (MSSLGKLLKLTLLGILLSFSCKFVFG), serve as a signal peptide directing secretion.

It is found in the endoplasmic reticulum. This is an uncharacterized protein from Schizosaccharomyces pombe (strain 972 / ATCC 24843) (Fission yeast).